The sequence spans 418 residues: Gamma-glutamyl phosphate reductase (418 aa).

Belongs to the gamma-glutamyl phosphate reductase family.

The protein localises to the cytoplasm. The catalysed reaction is L-glutamate 5-semialdehyde + phosphate + NADP(+) = L-glutamyl 5-phosphate + NADPH + H(+). It functions in the pathway amino-acid biosynthesis; L-proline biosynthesis; L-glutamate 5-semialdehyde from L-glutamate: step 2/2. Functionally, catalyzes the NADPH-dependent reduction of L-glutamate 5-phosphate into L-glutamate 5-semialdehyde and phosphate. The product spontaneously undergoes cyclization to form 1-pyrroline-5-carboxylate. The protein is Gamma-glutamyl phosphate reductase of Teredinibacter turnerae (strain ATCC 39867 / T7901).